The following is a 551-amino-acid chain: Eukaryotic translation initiation factor 3 subunit D-2 (551 aa).

Positions 108-152 (RARGRTGRGNATLGGLGGPVAGGSTANSTKYGKGRNTRNAQNMGR) are disordered. A compositionally biased stretch (gly residues) spans 119 to 128 (TLGGLGGPVA). Residues 290–304 (QFDLLTVNETSLEPP) are RNA gate. The interval 530–551 (AFDSDGDDESESSEPFGNSIDN) is disordered. Acidic residues predominate over residues 531–541 (FDSDGDDESES).

The protein belongs to the eIF-3 subunit D family. As to quaternary structure, component of the eukaryotic translation initiation factor 3 (eIF-3) complex. The eIF-3 complex interacts with pix.

The protein localises to the cytoplasm. Functionally, mRNA cap-binding component of the eukaryotic translation initiation factor 3 (eIF-3) complex, which is involved in protein synthesis of a specialized repertoire of mRNAs and, together with other initiation factors, stimulates binding of mRNA and methionyl-tRNAi to the 40S ribosome. The eIF-3 complex specifically targets and initiates translation of a subset of mRNAs involved in cell proliferation. In the eIF-3 complex, eif3d specifically recognizes and binds the 7-methylguanosine cap of a subset of mRNAs. This Drosophila yakuba (Fruit fly) protein is Eukaryotic translation initiation factor 3 subunit D-2.